The chain runs to 2894 residues: Bifunctional DNA-directed RNA polymerase subunit beta-beta' (2894 aa).

Positions 1–1378 are DNA-directed RNA polymerase subunit beta; sequence MANFTKLKNR…DVNIYGDEQD (1378 aa). Residues 1385-2894 are DNA-directed RNA polymerase subunit beta'; the sequence is PIAIKEDERP…QEEYEEDEEE (1510 aa). The Zn(2+) site is built by Cys1450, Cys1452, Cys1465, and Cys1468. Residues Asp1849, Asp1851, and Asp1853 each coordinate Mg(2+). The Zn(2+) site is built by Cys2179, Cys2253, Cys2260, and Cys2263.

The protein in the N-terminal section; belongs to the RNA polymerase beta chain family. This sequence in the C-terminal section; belongs to the RNA polymerase beta' chain family. As to quaternary structure, the RNAP catalytic core consists of 2 alpha, 1 beta/beta' and 1 omega subunit. When a sigma factor is associated with the core the holoenzyme is formed, which can initiate transcription. Mg(2+) is required as a cofactor. Zn(2+) serves as cofactor.

It carries out the reaction RNA(n) + a ribonucleoside 5'-triphosphate = RNA(n+1) + diphosphate. Functionally, DNA-dependent RNA polymerase catalyzes the transcription of DNA into RNA using the four ribonucleoside triphosphates as substrates. This is Bifunctional DNA-directed RNA polymerase subunit beta-beta' (rpoBC) from Helicobacter hepaticus (strain ATCC 51449 / 3B1).